A 695-amino-acid chain; its full sequence is Elongation factor G (695 aa).

The 275-residue stretch at 8–282 (EKTRNIGIMA…AVLDYLPAPT (275 aa)) folds into the tr-type G domain. GTP is bound by residues 17-24 (AHIDAGKT), 81-85 (DTPGH), and 135-138 (NKMD).

The protein belongs to the TRAFAC class translation factor GTPase superfamily. Classic translation factor GTPase family. EF-G/EF-2 subfamily.

Its subcellular location is the cytoplasm. In terms of biological role, catalyzes the GTP-dependent ribosomal translocation step during translation elongation. During this step, the ribosome changes from the pre-translocational (PRE) to the post-translocational (POST) state as the newly formed A-site-bound peptidyl-tRNA and P-site-bound deacylated tRNA move to the P and E sites, respectively. Catalyzes the coordinated movement of the two tRNA molecules, the mRNA and conformational changes in the ribosome. This Listeria monocytogenes serotype 4b (strain CLIP80459) protein is Elongation factor G.